Here is an 88-residue protein sequence, read N- to C-terminus: Small ribosomal subunit protein uS15 (88 aa).

This sequence belongs to the universal ribosomal protein uS15 family. In terms of assembly, part of the 30S ribosomal subunit. Forms a bridge to the 50S subunit in the 70S ribosome, contacting the 23S rRNA.

Functionally, one of the primary rRNA binding proteins, it binds directly to 16S rRNA where it helps nucleate assembly of the platform of the 30S subunit by binding and bridging several RNA helices of the 16S rRNA. Forms an intersubunit bridge (bridge B4) with the 23S rRNA of the 50S subunit in the ribosome. The chain is Small ribosomal subunit protein uS15 from Caldanaerobacter subterraneus subsp. tengcongensis (strain DSM 15242 / JCM 11007 / NBRC 100824 / MB4) (Thermoanaerobacter tengcongensis).